A 471-amino-acid polypeptide reads, in one-letter code: Ribosome biogenesis protein YTM1 (471 aa).

A ubiquitin-like (UBL) domain region spans residues 10–92 (VTARFTTRDE…ETRLEVEYTR (83 aa)). WD repeat units follow at residues 119-158 (SRAG…LATS), 165-203 (GRIT…RTIT), and 210-249 (SHRW…NPVA). The segment at 245-274 (ENPVAPSSLLPNSTAASNKRQKLSKPDRTV) is disordered. Positions 253-262 (LLPNSTAASN) are enriched in polar residues. WD repeat units follow at residues 285-325 (GHSS…CVDT), 327-366 (TTGH…TQIS), 372-412 (GHKN…TGGQ), and 436-471 (GHGE…ALGS). Positions 412-440 (QVGEGQQGESVHTIHRQGQSGPGKGHGEG) are disordered.

The protein belongs to the WD repeat WDR12/YTM1 family. Component of the NOP7 complex, composed of ERB1, NOP7 and YTM1. The complex is held together by ERB1, which interacts with NOP7 via its N-terminal domain and with YTM1 via a high-affinity interaction between the seven-bladed beta-propeller domains of the 2 proteins. The NOP7 complex associates with the 66S pre-ribosome. Interacts (via UBL domain) with MDN1 (via VWFA/MIDAS domain).

It localises to the nucleus. It is found in the nucleolus. The protein localises to the nucleoplasm. Component of the NOP7 complex, which is required for maturation of the 25S and 5.8S ribosomal RNAs and formation of the 60S ribosome. In Phaeosphaeria nodorum (strain SN15 / ATCC MYA-4574 / FGSC 10173) (Glume blotch fungus), this protein is Ribosome biogenesis protein YTM1.